The chain runs to 120 residues: Vanadium-binding protein 2 (120 aa).

The signal sequence occupies residues 1 to 20; sequence MSKVIFALVLVVVLVACINA. A propeptide spanning residues 21 to 29 is cleaved from the precursor; that stretch reads TYVEFEEAY. 9 disulfides stabilise this stretch: Cys-34/Cys-88, Cys-38/Cys-84, Cys-42/Cys-81, Cys-48/Cys-74, Cys-52/Cys-69, Cys-56/Cys-65, Cys-92/Cys-119, Cys-97/Cys-114, and Cys-101/Cys-111.

As to quaternary structure, interacts with VIP1. As to expression, expressed in vanadocytes.

It is found in the cytoplasm. Its function is as follows. Acts as a vanadium reductase which may form an electron transfer cascade in conjunction with NADPH and glutathione through thiol disulfide exchange reactions. Partial cleavage of its disulfide bonds results in the reduction of V(5+) to V(4+). Binds up to 24 V(4+) ions per protein at pH 7.5. Also binds Fe(3+) and Cu(2+) and, to a lesser extent, Co(2+), Zn(2+) and Ni(2+). The chain is Vanadium-binding protein 2 from Ascidia sydneiensis samea (Vanadium-rich ascidian).